The chain runs to 337 residues: Transcription initiation factor IIB (337 aa).

The TFIIB-type zinc finger occupies 37-68 (YTVECPECGSRALVRDYERAELVCSECGLVID). Zn(2+) is bound by residues C41, C44, C60, and C63. A run of 2 repeats spans residues 154–237 (SELD…SREL) and 248–329 (DYIP…ELAE).

The protein belongs to the TFIIB family.

Its function is as follows. Stabilizes TBP binding to an archaeal box-A promoter. Also responsible for recruiting RNA polymerase II to the pre-initiation complex (DNA-TBP-TFIIB). This chain is Transcription initiation factor IIB, found in Methanothrix thermoacetophila (strain DSM 6194 / JCM 14653 / NBRC 101360 / PT) (Methanosaeta thermophila).